Reading from the N-terminus, the 440-residue chain is 3-phosphoshikimate 1-carboxyvinyltransferase (440 aa).

3-phosphoshikimate-binding residues include Lys31, Ser32, and Arg36. Lys31 is a binding site for phosphoenolpyruvate. Phosphoenolpyruvate-binding residues include Gly104 and Arg133. Residues Ser178, Gln180, Asp328, and Lys355 each contribute to the 3-phosphoshikimate site. Gln180 contacts phosphoenolpyruvate. The active-site Proton acceptor is Asp328. Residues Arg359 and Arg401 each coordinate phosphoenolpyruvate.

Belongs to the EPSP synthase family. Monomer.

It is found in the cytoplasm. It catalyses the reaction 3-phosphoshikimate + phosphoenolpyruvate = 5-O-(1-carboxyvinyl)-3-phosphoshikimate + phosphate. The protein operates within metabolic intermediate biosynthesis; chorismate biosynthesis; chorismate from D-erythrose 4-phosphate and phosphoenolpyruvate: step 6/7. Functionally, catalyzes the transfer of the enolpyruvyl moiety of phosphoenolpyruvate (PEP) to the 5-hydroxyl of shikimate-3-phosphate (S3P) to produce enolpyruvyl shikimate-3-phosphate and inorganic phosphate. This is 3-phosphoshikimate 1-carboxyvinyltransferase from Thermosynechococcus vestitus (strain NIES-2133 / IAM M-273 / BP-1).